A 123-amino-acid chain; its full sequence is Small ribosomal subunit protein uS12 (123 aa).

The tract at residues 1–28 (MPTIQQLIRKPREPKRVRSKSQHLESCP) is disordered. At Asp89 the chain carries 3-methylthioaspartic acid.

The protein belongs to the universal ribosomal protein uS12 family. In terms of assembly, part of the 30S ribosomal subunit. Contacts proteins S8 and S17. May interact with IF1 in the 30S initiation complex.

Its function is as follows. With S4 and S5 plays an important role in translational accuracy. Functionally, interacts with and stabilizes bases of the 16S rRNA that are involved in tRNA selection in the A site and with the mRNA backbone. Located at the interface of the 30S and 50S subunits, it traverses the body of the 30S subunit contacting proteins on the other side and probably holding the rRNA structure together. The combined cluster of proteins S8, S12 and S17 appears to hold together the shoulder and platform of the 30S subunit. In Cereibacter sphaeroides (strain ATCC 17029 / ATH 2.4.9) (Rhodobacter sphaeroides), this protein is Small ribosomal subunit protein uS12.